The chain runs to 919 residues: Tight junction protein ZO-3 (919 aa).

Positions 11–93 (TATLSKDPRR…MANITVKRPR (83 aa)) constitute a PDZ 1 domain. A disordered region spans residues 92 to 173 (PRRIHLPATK…SPGGGSEANG (82 aa)). Ser112 is subject to Phosphoserine. Over residues 117–131 (GPQRVEEVDQGRGYD) the composition is skewed to basic and acidic residues. Ser136 bears the Phosphoserine mark. Positions 147–163 (RRPRPGRRGRAGSHGRR) are enriched in basic residues. Phosphoserine is present on residues Ser164, Ser169, Ser203, and Ser319. The PDZ 2 domain maps to 195–272 (SVLVKRRDSE…KLSLLVLRDR (78 aa)). Positions 279–377 (IPPAVSDSDS…SSQSMEDRGY (99 aa)) are disordered. Thr325 is subject to Phosphothreonine. Phosphoserine is present on Ser327. Residues 332–360 (PRLRRESSVDSRTISEPDEQRSELPRESS) are compositionally biased toward basic and acidic residues. Ser371 bears the Phosphoserine mark. In terms of domain architecture, PDZ 3 spans 380–446 (DTRVVRFLKG…LTREEAVQFL (67 aa)). In terms of domain architecture, SH3 spans 475-549 (GDSFYIRTHF…PNQSRAEQLA (75 aa)). The region spanning 580-761 (LRRGAKKTTQ…WYQELKAIIR (182 aa)) is the Guanylate kinase-like domain. A Phosphoserine modification is found at Ser591. Positions 791–801 (ADSSADLSCDS) are enriched in low complexity. Disordered stretches follow at residues 791 to 886 (ADSS…DSMR) and 899 to 919 (RVHD…ATDL). Residues 812–828 (EGGAYTDGEGYTDGEGG) are compositionally biased toward gly residues. A phosphoserine mark is found at Ser856, Ser905, and Ser906.

This sequence belongs to the MAGUK family. Interacts with occludin OCLN, claudins and TPJ1. Interacts with PATJ. Interacts with UBN1. Interacts with FASLG. Interacts with CCND1. Post-translationally, phosphorylated.

The protein localises to the cell membrane. Its subcellular location is the cell junction. The protein resides in the tight junction. It localises to the nucleus. In terms of biological role, TJP1, TJP2, and TJP3 are closely related scaffolding proteins that link tight junction (TJ) transmembrane proteins such as claudins, junctional adhesion molecules, and occludin to the actin cytoskeleton. The tight junction acts to limit movement of substances through the paracellular space and as a boundary between the compositionally distinct apical and basolateral plasma membrane domains of epithelial and endothelial cells. Binds and recruits PATJ to tight junctions where it connects and stabilizes apical and lateral components of tight junctions. Promotes cell-cycle progression through the sequestration of cyclin D1 (CCND1) at tight junctions during mitosis which prevents CCND1 degradation during M-phase and enables S-phase transition. With TJP1 and TJP2, participates in the junctional retention and stability of the transcription factor DBPA, but is not involved in its shuttling to the nucleus. Contrary to TJP2, TJP3 is dispensable for individual viability, embryonic development, epithelial differentiation, and the establishment of TJs, at least in the laboratory environment. The chain is Tight junction protein ZO-3 (TJP3) from Homo sapiens (Human).